The sequence spans 544 residues: Intercellular adhesion molecule 3 (544 aa).

The signal sequence occupies residues 1–31 (MIASGPPPRVYWTSLIFLLLACCLLPTGAQG). Over 32 to 486 (QTYQVRVEPK…MMDVQGRNPV (455 aa)) the chain is Extracellular. In terms of domain architecture, Ig-like C2-type 1 spans 48 to 105 (GEPLVVNCTLDCPGPGLISLETALSKEPHSRGLGWAAFRLTNVTGDMEILCSGICNKS). Residues N54, N89, N103, N112, N138, N190, N209, N243, N267, N296, N321, and N326 are each glycosylated (N-linked (GlcNAc...) asparagine). 2 disulfides stabilise this stretch: C55-C98 and C59-C102. The region spanning 134-200 (GEELNLSCLV…FSCRSELDLR (67 aa)) is the Ig-like C2-type 2 domain. C141 and C193 form a disulfide bridge. The 66-residue stretch at 237-302 (ETSWPVNCSL…IVCNVTLGVE (66 aa)) folds into the Ig-like C2-type 3 domain. The cysteines at positions 244 and 295 are disulfide-linked. In terms of domain architecture, Ig-like C2-type 4 spans 330–383 (GTPVTVTCAAGPQVQVMLDGVPAAVPGQPAQLQLKATEMDDRRTFFCNATLKVH). Cysteines 337 and 376 form a disulfide. N377, N390, and N456 each carry an N-linked (GlcNAc...) asparagine glycan. An Ig-like C2-type 5 domain is found at 417-470 (KTMHILQCQARGNPNPQLQCLREGSKFKVPVGIPFLVLLNYSGTYSCQAASSRG). A disulfide bond links C424 and C463. A helical membrane pass occupies residues 487 to 511 (TINIVLGVLAILGLVTLAAASVYVF). Over 512 to 544 (WVQRQHDIYHLTPRSTRWRLTSTQPVTVAEELS) the chain is Cytoplasmic.

The protein belongs to the immunoglobulin superfamily. ICAM family. Interacts with moesin/MSN. In terms of tissue distribution, leukocytes.

Its subcellular location is the membrane. In terms of biological role, ICAM proteins are ligands for the leukocyte adhesion protein LFA-1 (integrin alpha-L/beta-2). ICAM3 is also a ligand for integrin alpha-D/beta-2. In association with integrin alpha-L/beta-2, contributes to apoptotic neutrophil phagocytosis by macrophages. The polypeptide is Intercellular adhesion molecule 3 (ICAM3) (Bos taurus (Bovine)).